Reading from the N-terminus, the 237-residue chain is Phosphoribosylaminoimidazole-succinocarboxamide synthase (237 aa).

The protein belongs to the SAICAR synthetase family.

The enzyme catalyses 5-amino-1-(5-phospho-D-ribosyl)imidazole-4-carboxylate + L-aspartate + ATP = (2S)-2-[5-amino-1-(5-phospho-beta-D-ribosyl)imidazole-4-carboxamido]succinate + ADP + phosphate + 2 H(+). Its pathway is purine metabolism; IMP biosynthesis via de novo pathway; 5-amino-1-(5-phospho-D-ribosyl)imidazole-4-carboxamide from 5-amino-1-(5-phospho-D-ribosyl)imidazole-4-carboxylate: step 1/2. The polypeptide is Phosphoribosylaminoimidazole-succinocarboxamide synthase (Deinococcus deserti (strain DSM 17065 / CIP 109153 / LMG 22923 / VCD115)).